The primary structure comprises 223 residues: 26S proteasome non-ATPase regulatory subunit 9 (223 aa).

The span at 103–121 (RDKEKQARDMAEAHKEAMS) shows a compositional bias: basic and acidic residues. The interval 103–141 (RDKEKQARDMAEAHKEAMSRKLGQSESQGPPRAFAKVNS) is disordered. Residues 108–195 (QARDMAEAHK…KPLNVTVIRR (88 aa)) form the PDZ domain. Residue Ser-129 is modified to Phosphoserine.

The protein belongs to the proteasome subunit p27 family. Interacts with PSMC3. Part of a transient complex (modulator) containing PSMD9, PSMC6 and PSMC3 formed during the assembly of the 26S proteasome. As to expression, expressed in all tissues tested, highly expressed in liver and kidney.

In terms of biological role, acts as a chaperone during the assembly of the 26S proteasome, specifically of the base subcomplex of the PA700/19S regulatory complex (RC). During the base subcomplex assembly is part of an intermediate PSMD9:PSMC6:PSMC3 module, also known as modulator trimer complex; PSMD9 is released during the further base assembly process. This Homo sapiens (Human) protein is 26S proteasome non-ATPase regulatory subunit 9 (PSMD9).